We begin with the raw amino-acid sequence, 215 residues long: Dual specificity phosphatase 29 (215 aa).

The Tyrosine-protein phosphatase domain maps to 53-201 (HVNEVWPRLH…LRELDKQLVK (149 aa)). Substrate is bound at residue 145 to 152 (HCAMGRSR). The Phosphocysteine intermediate role is filled by C146.

The protein belongs to the protein-tyrosine phosphatase family. Non-receptor class dual specificity subfamily. As to quaternary structure, homodimer. Interacts with PRKAA2. In terms of tissue distribution, skeletal muscle, liver and adipose tissue.

The protein localises to the cytoplasm. It localises to the nucleus. It catalyses the reaction O-phospho-L-tyrosyl-[protein] + H2O = L-tyrosyl-[protein] + phosphate. It carries out the reaction O-phospho-L-seryl-[protein] + H2O = L-seryl-[protein] + phosphate. The enzyme catalyses O-phospho-L-threonyl-[protein] + H2O = L-threonyl-[protein] + phosphate. Dual specificity phosphatase able to dephosphorylate phosphotyrosine, phosphoserine and phosphothreonine residues within the same substrate, with a preference for phosphotyrosine as a substrate. Involved in the modulation of intracellular signaling cascades. In skeletal muscle regulates systemic glucose homeostasis by activating, AMPK, an energy sensor protein kinase. Affects MAP kinase signaling though modulation of the MAPK1/2 cascade in skeletal muscle promoting muscle cell differentiation, development and atrophy. The chain is Dual specificity phosphatase 29 from Mus musculus (Mouse).